A 92-amino-acid polypeptide reads, in one-letter code: uncharacterized protein (92 aa).

3 helical membrane-spanning segments follow: residues 1–21, 30–50, and 62–82; these read MNIYVWLFAIIALSFSALVGL, ANVLVGESIITVVAGTLIVVI, and IALAIFICGVVGAFAFCKVIG.

This sequence to M.thermoautotrophicum MTH1250.

It is found in the cell membrane. This is an uncharacterized protein from Methanocaldococcus jannaschii (strain ATCC 43067 / DSM 2661 / JAL-1 / JCM 10045 / NBRC 100440) (Methanococcus jannaschii).